We begin with the raw amino-acid sequence, 424 residues long: MASQGCVDWQFSGSDAAEKAAQASLGTYSSEIFSLCDPQGKPILPPLSEEAETSHTAEKAVVKAVLCGTGNAYAPSIGLPVAKRAVAEYLNRDLDNKLTGDDVYMTVGCKQAIELAVSILAKPKANILLPRPGFPWDMVHSIYKHLEVRRYEFIPERDFEIDFNSVREMVDENTFAIFIINPHNPNGNYYTEAHLKQLATLARELGIMVVSDEVYRWSVFGSNPFVPMGKFSSIVPVITLGSISKGWIVPGWRTGWLALHDLNGVFRSTKVLKAAKEFLEITSKPPTVIQAAIPTILEKTPQDFFEKRGIFLKDKVDFGYSKLKNIPTLTCYMKPESCTFLWTKLDPLHFVDIEDDHDFCRKLAKEENLVVLPGIAFGQNNWLRHSIDMETPRLEDAFERLKSFCERHSVIVEASSLKDVNGVN.

The protein belongs to the class-I pyridoxal-phosphate-dependent aminotransferase family. Pyridoxal 5'-phosphate serves as cofactor.

In Arabidopsis thaliana (Mouse-ear cress), this protein is Probable aminotransferase TAT4.